The chain runs to 748 residues: Catalase-peroxidase (748 aa).

Positions 1–14 (MTDTSDARPPHSDA) are enriched in basic and acidic residues. The tract at residues 1 to 40 (MTDTSDARPPHSDAKTASNSESENPAIDSPEPKSHAPLTN) is disordered. Residues 112–239 (WHAAGTYRIF…FGATTMGLIY (128 aa)) constitute a cross-link (tryptophyl-tyrosyl-methioninium (Trp-Tyr) (with M-265)). The active-site Proton acceptor is His-113. A cross-link (tryptophyl-tyrosyl-methioninium (Tyr-Met) (with W-112)) is located at residues 239–265 (YVNPEGPEGKPDPLAAAHDIRETFGRM). His-280 is a binding site for heme b.

Belongs to the peroxidase family. Peroxidase/catalase subfamily. As to quaternary structure, homodimer or homotetramer. Requires heme b as cofactor. In terms of processing, formation of the three residue Trp-Tyr-Met cross-link is important for the catalase, but not the peroxidase activity of the enzyme.

It catalyses the reaction H2O2 + AH2 = A + 2 H2O. The enzyme catalyses 2 H2O2 = O2 + 2 H2O. In terms of biological role, bifunctional enzyme with both catalase and broad-spectrum peroxidase activity. In Mycolicibacterium gilvum (strain PYR-GCK) (Mycobacterium gilvum (strain PYR-GCK)), this protein is Catalase-peroxidase.